Consider the following 377-residue polypeptide: Geranylgeranyl transferase type-1 subunit beta (377 aa).

4 PFTB repeats span residues 144-186 (KEAC…YMLN), 193-234 (MKKA…CLMG), 245-284 (LNRI…KLLK), and 291-333 (FEKN…SLME). Geranylgeranyl diphosphate-binding positions include 219–221 (HGG) and 263–266 (RPNK). Residues D269 and C271 each coordinate Zn(2+). 272-275 (YSFW) provides a ligand contact to geranylgeranyl diphosphate. Zn(2+) is bound at residue H321.

Belongs to the protein prenyltransferase subunit beta family. Heterodimer of FNTA and PGGT1B. PGGT1B mediates interaction with substrate peptides. It depends on Zn(2+) as a cofactor. Mg(2+) serves as cofactor.

It catalyses the reaction geranylgeranyl diphosphate + L-cysteinyl-[protein] = S-geranylgeranyl-L-cysteinyl-[protein] + diphosphate. Catalyzes the transfer of a geranyl-geranyl moiety from geranyl-geranyl pyrophosphate to a cysteine at the fourth position from the C-terminus of proteins having the C-terminal sequence Cys-aliphatic-aliphatic-X. Known substrates include RAC1, RAC2, RAP1A and RAP1B. The chain is Geranylgeranyl transferase type-1 subunit beta (PGGT1B) from Homo sapiens (Human).